The following is a 677-amino-acid chain: Methionine--tRNA ligase (677 aa).

Residues 15–25 (PYANGSIHLGH) carry the 'HIGH' region motif. 4 residues coordinate Zn(2+): C146, C149, C159, and C162. The 'KMSKS' region motif lies at 333-337 (KMSKS). ATP is bound at residue K336. Residues 575–677 (DFAKIDLRVA…DGAKPGQQVK (103 aa)) form the tRNA-binding domain.

Belongs to the class-I aminoacyl-tRNA synthetase family. MetG type 1 subfamily. In terms of assembly, homodimer. It depends on Zn(2+) as a cofactor.

The protein localises to the cytoplasm. It catalyses the reaction tRNA(Met) + L-methionine + ATP = L-methionyl-tRNA(Met) + AMP + diphosphate. Functionally, is required not only for elongation of protein synthesis but also for the initiation of all mRNA translation through initiator tRNA(fMet) aminoacylation. This Salmonella typhi protein is Methionine--tRNA ligase.